The following is a 341-amino-acid chain: Calcium-binding protein 39 (341 aa).

It belongs to the Mo25 family. Component of a trimeric complex composed of STK11/LKB1, STRAD (STRADA or STRADB) and CAB39/MO25 (CAB39/MO25alpha or CAB39L/MO25beta): the complex tethers STK11/LKB1 in the cytoplasm and stimulates its catalytic activity.

The protein resides in the cytoplasm. Component of a complex that binds and activates STK11/LKB1. In the complex, required to stabilize the interaction between CAB39/MO25 (CAB39/MO25alpha or CAB39L/MO25beta) and STK11/LKB1. The sequence is that of Calcium-binding protein 39 (CAB39) from Bos taurus (Bovine).